Reading from the N-terminus, the 458-residue chain is Phosphoglucosamine mutase (458 aa).

Serine 108 functions as the Phosphoserine intermediate in the catalytic mechanism. Mg(2+) contacts are provided by serine 108, aspartate 247, aspartate 249, and aspartate 251. Serine 108 bears the Phosphoserine mark.

The protein belongs to the phosphohexose mutase family. The cofactor is Mg(2+). In terms of processing, activated by phosphorylation.

It catalyses the reaction alpha-D-glucosamine 1-phosphate = D-glucosamine 6-phosphate. Catalyzes the conversion of glucosamine-6-phosphate to glucosamine-1-phosphate. This Thiobacillus denitrificans (strain ATCC 25259 / T1) protein is Phosphoglucosamine mutase.